A 574-amino-acid chain; its full sequence is MGNTCCVAPATTDEVGAPPRDHHHAAKKSPAPSATTTTATRQRHGQEPKPKPKPRARAKPNPYDWAPPRVLPARGGAAASAVRVLEGVVPHHPRLRVTDKYQLGRELGRGEFGVTHLATDRATRERLACKSIPKRRLRTAVDVADVRREVAIMASLPDHPALVRLRAAYEDADAVHLVMELCDGGELFDRIVARGRYTERAAAAAARTVAEVVRACHAHGVMHRDLKPENFLYAGKAEDAQLKAIDFGLSVFFRPGERFREIVGSPYYMAPEVLRRDYGPEVDIWSAGVILYILLCGVPPFWAETEQGVARAILRGAADFDREPWPRISRAAKSLVRQMLDVDPRRRPTAQQVLDHPWLHHAARAPNVPLGDVVRARLKQFSLMNRLKKKAMRVIAEHLSVEEVEVIKDMFALMDTDNNGRVTLQELKDGLTKVGSKLAEPEMELLMEAADVDGNGYLDYGEFVAVTIHLQRLSNDNHLRTAFLFFDKDGSGYIDRAELADALADDSGHADDAVLDHILREVDTDKDGRISYEEFVAMMKSGTDWRKASRQYSRERFKTLSNSLIKDGSITMAR.

Residues 1–64 (MGNTCCVAPA…RARAKPNPYD (64 aa)) are disordered. Gly2 is lipidated: N-myristoyl glycine. A compositionally biased stretch (low complexity) spans 28-40 (KSPAPSATTTTAT). Residues 101–359 (YQLGRELGRG…AQQVLDHPWL (259 aa)) enclose the Protein kinase domain. ATP contacts are provided by residues 107–115 (LGRGEFGVT) and Lys130. The active-site Proton acceptor is Asp225. The tract at residues 365 to 395 (APNVPLGDVVRARLKQFSLMNRLKKKAMRVI) is autoinhibitory domain. 4 EF-hand domains span residues 402 to 437 (EEVE…VGSK), 438 to 473 (LAEP…LQRL), 474 to 509 (SNDN…DSGH), and 510 to 545 (ADDA…GTDW). Ca(2+) is bound by residues Asp415, Asp417, Asn419, Arg421, Glu426, Asp451, Asp453, Asn455, Tyr457, Glu462, Asp487, Asp489, Ser491, Tyr493, Glu498, Asp523, Asp525, Asp527, Arg529, and Glu534.

Belongs to the protein kinase superfamily. Ser/Thr protein kinase family. CDPK subfamily. As to expression, expressed in leaf blades and stems. Expressed at low levels in anthers and spikelets.

It localises to the membrane. It catalyses the reaction L-seryl-[protein] + ATP = O-phospho-L-seryl-[protein] + ADP + H(+). The catalysed reaction is L-threonyl-[protein] + ATP = O-phospho-L-threonyl-[protein] + ADP + H(+). Its activity is regulated as follows. Activated by calcium. Autophosphorylation may play an important role in the regulation of the kinase activity. Its function is as follows. May play a role in signal transduction pathways that involve calcium as a second messenger. Functions in signal transduction pathways that positively regulate responses to drought, osmotic, and dehydration stress. Regulates expression of stress-associated genes in response to drought. Involved in tolerance to drought stress by increasing proline and soluble sugars, and improving stomatal closure. Required for pollen maturation and spikelet fertility. This Oryza sativa subsp. japonica (Rice) protein is Calcium-dependent protein kinase 9.